The sequence spans 450 residues: Probable malate:quinone oxidoreductase (450 aa).

This sequence belongs to the MQO family. FAD serves as cofactor.

It carries out the reaction (S)-malate + a quinone = a quinol + oxaloacetate. It functions in the pathway carbohydrate metabolism; tricarboxylic acid cycle; oxaloacetate from (S)-malate (quinone route): step 1/1. This chain is Probable malate:quinone oxidoreductase, found in Helicobacter pylori (strain P12).